We begin with the raw amino-acid sequence, 838 residues long: Probable inorganic carbon transporter subunit DabA (838 aa).

Residues Cys353, Asp355, His537, and Cys552 each coordinate Zn(2+).

It belongs to the inorganic carbon transporter (TC 9.A.2) DabA family. In terms of assembly, forms a complex with DabB. Requires Zn(2+) as cofactor.

It localises to the cell membrane. Functionally, part of an energy-coupled inorganic carbon pump. This Chloroflexus aurantiacus (strain ATCC 29366 / DSM 635 / J-10-fl) protein is Probable inorganic carbon transporter subunit DabA.